A 202-amino-acid chain; its full sequence is CASP-like protein 2B1 (202 aa).

Topologically, residues 1 to 29 (MSYLGVGVSPGNVPVYHGSNLKVIDKRVR) are cytoplasmic. A helical membrane pass occupies residues 30 to 50 (LAELVLRCLICGLGVLAAVLV). Residues 51-72 (GTDTQVKEIFSIQKKARFTDMK) lie on the Extracellular side of the membrane. Residues 73 to 93 (ALVFLVIANGIAAAYSLLQGV) form a helical membrane-spanning segment. The Cytoplasmic segment spans residues 94–109 (RCVVGMVRGSALFSKP). Residues 110-130 (LAWAIFSGDQMMAYLTVAAVA) form a helical membrane-spanning segment. At 131 to 164 (AAAQSAVFAKLGQPELQWMKICNMYGKFCNQVGE) the chain is on the extracellular side. The helical transmembrane segment at 165–185 (GIASALLVSVSMVVLSCISAF) threads the bilayer. Residues 186 to 202 (SLFRLYGANKGKDCTRW) are Cytoplasmic-facing.

It belongs to the Casparian strip membrane proteins (CASP) family. As to quaternary structure, homodimer and heterodimers.

Its subcellular location is the cell membrane. The polypeptide is CASP-like protein 2B1 (Ricinus communis (Castor bean)).